A 408-amino-acid chain; its full sequence is Arginine biosynthesis bifunctional protein ArgJ (408 aa).

Substrate-binding residues include Thr158, Lys184, Thr195, Glu281, Asn403, and Thr408. Thr195 (nucleophile) is an active-site residue.

Belongs to the ArgJ family. As to quaternary structure, heterotetramer of two alpha and two beta chains.

It localises to the cytoplasm. It carries out the reaction N(2)-acetyl-L-ornithine + L-glutamate = N-acetyl-L-glutamate + L-ornithine. The enzyme catalyses L-glutamate + acetyl-CoA = N-acetyl-L-glutamate + CoA + H(+). It functions in the pathway amino-acid biosynthesis; L-arginine biosynthesis; L-ornithine and N-acetyl-L-glutamate from L-glutamate and N(2)-acetyl-L-ornithine (cyclic): step 1/1. The protein operates within amino-acid biosynthesis; L-arginine biosynthesis; N(2)-acetyl-L-ornithine from L-glutamate: step 1/4. Functionally, catalyzes two activities which are involved in the cyclic version of arginine biosynthesis: the synthesis of N-acetylglutamate from glutamate and acetyl-CoA as the acetyl donor, and of ornithine by transacetylation between N(2)-acetylornithine and glutamate. This Bacillus thuringiensis subsp. konkukian (strain 97-27) protein is Arginine biosynthesis bifunctional protein ArgJ.